Reading from the N-terminus, the 156-residue chain is MPRKGPVAKRDVLPDPLYNSKLVTRLINKMMIDGKKGKAQTILYKSFDIIKERTGNDAMEVFEQALKNIMPVLEVKARRVGGANYQVPVEVRPERRTTLGLRWLVNYARLRGEKTMEERLANEILDAANNTGAAVKKREDTHKMAEANKAFAHYRW.

This sequence belongs to the universal ribosomal protein uS7 family. Part of the 30S ribosomal subunit. Contacts proteins S9 and S11.

Its function is as follows. One of the primary rRNA binding proteins, it binds directly to 16S rRNA where it nucleates assembly of the head domain of the 30S subunit. Is located at the subunit interface close to the decoding center, probably blocks exit of the E-site tRNA. The protein is Small ribosomal subunit protein uS7 of Bacillus licheniformis (strain ATCC 14580 / DSM 13 / JCM 2505 / CCUG 7422 / NBRC 12200 / NCIMB 9375 / NCTC 10341 / NRRL NRS-1264 / Gibson 46).